A 672-amino-acid polypeptide reads, in one-letter code: Hydrogenase-4 component B (672 aa).

Residues 1–5 (MDALQ) are Periplasmic-facing. Residues 6–26 (LLTWSLILYLFASLASLFLLG) form a helical membrane-spanning segment. The Cytoplasmic segment spans residues 27-30 (LDRL). Residues 31–51 (AIKLSGITSLVGGVIGIISGI) traverse the membrane as a helical segment. The Periplasmic segment spans residues 52–79 (TQLHAGVTLVARFAPPFEFADLTLRMDS). A helical transmembrane segment spans residues 80 to 100 (LSAFMVLVISLLVVVCSLYSL). Residues 101-119 (TYMREYEGKGAAAMGFFMN) are Cytoplasmic-facing. A helical transmembrane segment spans residues 120-140 (IFIASMVALLVMDNAFWFIVL). Residues 141–164 (FEMMSLSSWFLVIARQDKTSINAG) are Periplasmic-facing. The helical transmembrane segment at 165-185 (MLYFFIAHAGSVLIMIAFLLM) threads the bilayer. Residues 186–199 (GRESGSLDFASFRT) lie on the Cytoplasmic side of the membrane. Residues 200–220 (LSLSPGLASAVFLLAFFGFGA) traverse the membrane as a helical segment. Over 221-242 (KAGMMPLHSWLPRAHPAAPSHA) the chain is Periplasmic. Residues 243-263 (SALMSGVMVKIGIFGILKVAM) form a helical membrane-spanning segment. The Cytoplasmic segment spans residues 264 to 272 (DLLAQTGLP). Residues 273–293 (LWWGILVMAIGAISALLGVLY) traverse the membrane as a helical segment. The Periplasmic segment spans residues 294–311 (ALAEQDIKRLLAWSTVEN). The helical transmembrane segment at 312-332 (VGIILLAVGVAMVGLSLHDPL) threads the bilayer. The Cytoplasmic segment spans residues 333 to 342 (LTVVGLLGAL). A helical transmembrane segment spans residues 343 to 363 (FHLLNHALFKGLLFLGAGAII). The Periplasmic portion of the chain corresponds to 364–384 (SRLHTHDMEKMGALAKRMPWT). Residues 385–405 (AAACLIGCLAISAIPPLNGFI) traverse the membrane as a helical segment. At 406-427 (SEWYTWQSLFSLSRVEAVALQL) the chain is on the cytoplasmic side. Residues 428–448 (AGPIAMVMLAVTGGLAVMCFV) traverse the membrane as a helical segment. Residues 449-474 (KMYGITFCGAPRSTHAEEAQEVPNTM) lie on the Periplasmic side of the membrane. Residues 475-495 (IVAMLLLAALCVLIALSASWL) form a helical membrane-spanning segment. At 496–504 (APKIMHIAH) the chain is on the cytoplasmic side. The chain crosses the membrane as a helical span at residues 505–525 (AFTNTPPATVASGIALVPGTF). The Periplasmic portion of the chain corresponds to 526–531 (HTQVTP). The chain crosses the membrane as a helical span at residues 532–552 (SLLLLLLLAMPLLPGLYWLWC). Over 553 to 651 (RSRRAAFRRT…KEIQHLQSGD (99 aa)) the chain is Cytoplasmic. Residues 652-672 (FRLYCLYVVAALVVLLIAIAV) traverse the membrane as a helical segment.

Belongs to the complex I subunit 5 family.

It is found in the cell inner membrane. In terms of biological role, possible component of hydrogenase 4. The chain is Hydrogenase-4 component B from Escherichia coli (strain K12).